A 643-amino-acid chain; its full sequence is tRNA 5-methylaminomethyl-2-thiouridine biosynthesis bifunctional protein MnmC (643 aa).

Residues 1–223 (MPDRLVSATL…VDDRLVGDYA (223 aa)) are tRNA (mnm(5)s(2)U34)-methyltransferase. The segment at 247-643 (IGAGLAGCAV…LRARRVGSAG (397 aa)) is FAD-dependent cmnm(5)s(2)U34 oxidoreductase.

In the N-terminal section; belongs to the methyltransferase superfamily. tRNA (mnm(5)s(2)U34)-methyltransferase family. The protein in the C-terminal section; belongs to the DAO family. FAD is required as a cofactor.

The protein resides in the cytoplasm. The enzyme catalyses 5-aminomethyl-2-thiouridine(34) in tRNA + S-adenosyl-L-methionine = 5-methylaminomethyl-2-thiouridine(34) in tRNA + S-adenosyl-L-homocysteine + H(+). In terms of biological role, catalyzes the last two steps in the biosynthesis of 5-methylaminomethyl-2-thiouridine (mnm(5)s(2)U) at the wobble position (U34) in tRNA. Catalyzes the FAD-dependent demodification of cmnm(5)s(2)U34 to nm(5)s(2)U34, followed by the transfer of a methyl group from S-adenosyl-L-methionine to nm(5)s(2)U34, to form mnm(5)s(2)U34. The sequence is that of tRNA 5-methylaminomethyl-2-thiouridine biosynthesis bifunctional protein MnmC from Burkholderia orbicola (strain AU 1054).